A 348-amino-acid chain; its full sequence is L-threonine 3-dehydrogenase (348 aa).

Residue Cys-42 participates in Zn(2+) binding. Active-site charge relay system residues include Thr-44 and His-47. 6 residues coordinate Zn(2+): His-67, Glu-68, Cys-97, Cys-100, Cys-103, and Cys-111. Residues Leu-179, Glu-199, Arg-204, 266-268, and 291-292 contribute to the NAD(+) site; these read LGL and IT.

This sequence belongs to the zinc-containing alcohol dehydrogenase family. As to quaternary structure, homodimer. Homotetramer; dimer of dimers. Requires Zn(2+) as cofactor.

The protein localises to the cytoplasm. The catalysed reaction is L-threonine + NAD(+) = (2S)-2-amino-3-oxobutanoate + NADH + H(+). It functions in the pathway amino-acid degradation; L-threonine degradation via oxydo-reductase pathway; glycine from L-threonine: step 1/2. Its activity is regulated as follows. Is totally inhibited by EDTA in vitro. Its function is as follows. Catalyzes the NAD(+)-dependent oxidation of L-threonine to 2-amino-3-ketobutyrate. Is much less efficient when using NADP(+) instead of NAD(+). To a lesser extent, also catalyzes the oxidation of L-serine and DL-threo-3-phenylserine, but not that of L-allo-threonine, D-threonine and D-allo-threonine and many other L-amino acids. In Pyrococcus horikoshii (strain ATCC 700860 / DSM 12428 / JCM 9974 / NBRC 100139 / OT-3), this protein is L-threonine 3-dehydrogenase.